A 496-amino-acid polypeptide reads, in one-letter code: Glycerol kinase (496 aa).

Threonine 12 is an ADP binding site. Threonine 12, threonine 13, and serine 14 together coordinate ATP. Threonine 12 is a sn-glycerol 3-phosphate binding site. Arginine 16 provides a ligand contact to ADP. Arginine 82, glutamate 83, and tyrosine 134 together coordinate sn-glycerol 3-phosphate. Positions 82, 83, and 134 each coordinate glycerol. Histidine 230 carries the phosphohistidine; by HPr modification. Aspartate 244 lines the sn-glycerol 3-phosphate pocket. 2 residues coordinate glycerol: aspartate 244 and glutamine 245. Positions 266 and 309 each coordinate ADP. Positions 266, 309, 313, and 410 each coordinate ATP. Residues glycine 410 and asparagine 414 each contribute to the ADP site.

This sequence belongs to the FGGY kinase family. In terms of assembly, homotetramer and homodimer (in equilibrium). The phosphoenolpyruvate-dependent sugar phosphotransferase system (PTS), including enzyme I, and histidine-containing protein (HPr) are required for the phosphorylation, which leads to the activation of the enzyme.

The enzyme catalyses glycerol + ATP = sn-glycerol 3-phosphate + ADP + H(+). It participates in polyol metabolism; glycerol degradation via glycerol kinase pathway; sn-glycerol 3-phosphate from glycerol: step 1/1. Activated by phosphorylation and inhibited by fructose 1,6-bisphosphate (FBP). Key enzyme in the regulation of glycerol uptake and metabolism. Catalyzes the phosphorylation of glycerol to yield sn-glycerol 3-phosphate. The chain is Glycerol kinase from Bacillus mycoides (strain KBAB4) (Bacillus weihenstephanensis).